The following is a 379-amino-acid chain: Cytochrome b (379 aa).

4 helical membrane passes run 33-53 (FGSL…FLAM), 77-98 (WLIR…FIHV), 113-133 (WNIG…GYVL), and 178-198 (FFAF…VHLL). Positions 83 and 97 each coordinate heme b. Heme b-binding residues include histidine 182 and histidine 196. Histidine 201 is an a ubiquinone binding site. 4 helical membrane passes run 226–246 (IKDL…ALFF), 288–308 (LGGV…PLLN), 320–340 (ITQI…WIGG), and 347–367 (FTMI…ILMP).

This sequence belongs to the cytochrome b family. The cytochrome bc1 complex contains 11 subunits: 3 respiratory subunits (MT-CYB, CYC1 and UQCRFS1), 2 core proteins (UQCRC1 and UQCRC2) and 6 low-molecular weight proteins (UQCRH/QCR6, UQCRB/QCR7, UQCRQ/QCR8, UQCR10/QCR9, UQCR11/QCR10 and a cleavage product of UQCRFS1). This cytochrome bc1 complex then forms a dimer. Requires heme b as cofactor.

The protein localises to the mitochondrion inner membrane. In terms of biological role, component of the ubiquinol-cytochrome c reductase complex (complex III or cytochrome b-c1 complex) that is part of the mitochondrial respiratory chain. The b-c1 complex mediates electron transfer from ubiquinol to cytochrome c. Contributes to the generation of a proton gradient across the mitochondrial membrane that is then used for ATP synthesis. The polypeptide is Cytochrome b (MT-CYB) (Akodon dayi (Day's grass mouse)).